Here is a 200-residue protein sequence, read N- to C-terminus: Dephospho-CoA kinase (200 aa).

One can recognise a DPCK domain in the interval 4 to 200; the sequence is VIGLTGGIAS…AILKKWNIID (197 aa). 12–17 serves as a coordination point for ATP; that stretch reads ASGKST.

The protein belongs to the CoaE family.

The protein localises to the cytoplasm. The catalysed reaction is 3'-dephospho-CoA + ATP = ADP + CoA + H(+). It functions in the pathway cofactor biosynthesis; coenzyme A biosynthesis; CoA from (R)-pantothenate: step 5/5. Catalyzes the phosphorylation of the 3'-hydroxyl group of dephosphocoenzyme A to form coenzyme A. The polypeptide is Dephospho-CoA kinase (Bacillus cereus (strain ZK / E33L)).